Reading from the N-terminus, the 402-residue chain is Probable peptidoglycan glycosyltransferase FtsW (402 aa).

Residues 1–24 lie on the Cytoplasmic side of the membrane; that stretch reads MLYRLKLLLSGQNTKKERVRAKLE. The helical transmembrane segment at 25–45 threads the bilayer; that stretch reads IDISIVFVMLGLLIFGWVMVT. The Periplasmic segment spans residues 46–63; the sequence is SASMVVALDDYNNPYFYS. The helical transmembrane segment at 64-84 threads the bilayer; it reads IRQGFFAVIAIFLFLLALLVP. Topologically, residues 85 to 91 are cytoplasmic; the sequence is TKNYEKN. A helical transmembrane segment spans residues 92–112; sequence YNAFFFIMLIVLVAVLVPGVG. The Periplasmic portion of the chain corresponds to 113 to 121; sequence KSVNGARRW. Residues 122–142 traverse the membrane as a helical segment; the sequence is IPLIIINIQVAELAKLLAIIF. Over 143-160 the chain is Cytoplasmic; sequence FSGYIAENLPKMTNFKEG. The next 2 helical transmembrane spans lie at 161 to 181 and 182 to 202; these read ILTPITLLGCIAVLLLMQPDF and GSTVVISICVMGMLFVSGNKV. Residue R203 is a topological domain, cytoplasmic. The chain crosses the membrane as a helical span at residues 204–224; that stretch reads WYGLLIGAMLIMATMLVIISP. At 225–284 the chain is on the periplasmic side; the sequence is YRMHRITGFLHPWENANGSGYQLVQALIGFGRGGWFGDGLGNGVQKQFFLPEAHTDFITS. A helical membrane pass occupies residues 285–305; the sequence is VIAEEIGVIGLMILLMVYLFI. Over 306–324 the chain is Cytoplasmic; the sequence is VFRAMNIAKMAFELKRYYQ. A helical transmembrane segment spans residues 325-345; that stretch reads AFLSYGISFWIGFQVFVNIGV. The Periplasmic segment spans residues 346-357; it reads NTGLLPTKGLTL. Residues 358-378 traverse the membrane as a helical segment; it reads PLISYGGSSLLIMCFTLGILV. Residues 379-402 are Cytoplasmic-facing; it reads RVDFENKLLADTINPKYIYKKVRK.

The protein belongs to the SEDS family. FtsW subfamily.

It is found in the cell inner membrane. The catalysed reaction is [GlcNAc-(1-&gt;4)-Mur2Ac(oyl-L-Ala-gamma-D-Glu-L-Lys-D-Ala-D-Ala)](n)-di-trans,octa-cis-undecaprenyl diphosphate + beta-D-GlcNAc-(1-&gt;4)-Mur2Ac(oyl-L-Ala-gamma-D-Glu-L-Lys-D-Ala-D-Ala)-di-trans,octa-cis-undecaprenyl diphosphate = [GlcNAc-(1-&gt;4)-Mur2Ac(oyl-L-Ala-gamma-D-Glu-L-Lys-D-Ala-D-Ala)](n+1)-di-trans,octa-cis-undecaprenyl diphosphate + di-trans,octa-cis-undecaprenyl diphosphate + H(+). Its pathway is cell wall biogenesis; peptidoglycan biosynthesis. Functionally, peptidoglycan polymerase that is essential for cell division. This is Probable peptidoglycan glycosyltransferase FtsW from Francisella salina.